Here is a 77-residue protein sequence, read N- to C-terminus: DNA-directed RNA polymerase subunit Rpo5 (77 aa).

This sequence belongs to the archaeal Rpo5/eukaryotic RPB5 RNA polymerase subunit family. Part of the RNA polymerase complex.

Its subcellular location is the cytoplasm. It carries out the reaction RNA(n) + a ribonucleoside 5'-triphosphate = RNA(n+1) + diphosphate. Its function is as follows. DNA-dependent RNA polymerase (RNAP) catalyzes the transcription of DNA into RNA using the four ribonucleoside triphosphates as substrates. This is DNA-directed RNA polymerase subunit Rpo5 from Methanosphaera stadtmanae (strain ATCC 43021 / DSM 3091 / JCM 11832 / MCB-3).